A 114-amino-acid chain; its full sequence is uncharacterized protein (114 aa).

Transmembrane regions (helical) follow at residues 21 to 41 (LASS…VCLF), 65 to 85 (GCFS…SALI), and 93 to 113 (LSVF…ILTD).

The protein localises to the membrane. This is an uncharacterized protein from Saccharomyces cerevisiae (strain ATCC 204508 / S288c) (Baker's yeast).